Reading from the N-terminus, the 483-residue chain is Protein PLASTID TRANSCRIPTIONALLY ACTIVE 14 (483 aa).

A chloroplast-targeting transit peptide spans 1–62 (MASSVSLQFL…TQPFPLFQSP (62 aa)). Positions 80 to 325 (YKIGYVRSVR…KGEEMTINYM (246 aa)) constitute an SET domain. S-adenosyl-L-methionine is bound at residue Tyr-324.

This sequence belongs to the class V-like SAM-binding methyltransferase superfamily. Component of the transcriptionally active chromosome (TAC) complexes. Interacts with PTAC12/HMR/PAP5 and PTAC7. Binds to SL1/MTERF3. Mostly expressed in leaves, flowers and seedlings, and, to a lower extent, in stems and roots.

The protein localises to the plastid. The protein resides in the chloroplast thylakoid. Essential for chloroplast development, especially for thylakoid formation. Involved in plastid gene expression, probably by maintaining plastid-encoded RNA polymerase (PEP) activity. The protein is Protein PLASTID TRANSCRIPTIONALLY ACTIVE 14 of Arabidopsis thaliana (Mouse-ear cress).